The chain runs to 275 residues: Methyltransferase str2 (275 aa).

Belongs to the methyltransferase superfamily. LaeA methyltransferase family.

It functions in the pathway mycotoxin biosynthesis. In terms of biological role, methyltransferase; part of the gene cluster that mediates the biosynthesis of strobilurin A, an antifungal polyketide that contains a key beta-methoxyacrylate toxophore that targets the complex III of the mitochondrial electron transport chain. Strobilurin biosynthesis begins with construction of benzoyl CoA by step-wise elimination of ammonia from phenylalanine by the phenylalanine ammonia-lyase str11, oxygenation by str8 and retro-Claisen reaction to form benzoic acid, which is activated to its CoA thiolester benzoyl CoA by the dedicated CoA ligase str10. Benzoyl CoA forms the starter unit for the highly reducing polyketide synthase stpks1 that produces the polyketide prestrobilutin A. The FAD-dependent oxygenase str9 then catalyzes the key oxidative rearrangement responsible for the creation of the beta-methoxyacrylate toxophore. Str9 performs epoxidation of the 2,3 olefin of prestrobilutin A, followed by Meinwald rearrangement to furnish the aldehyde intermediate. Rapid enolization of the aldehyde intermediate would give the beta-methoxyacrylate skeleton and methylations catalyzed by str2 and str3 complete the synthesis and lead to the production of strobilurin A. The short-chain dehydrogenase stl2 and the dehydrogenase str4 play a role in the shunt pathway leading to the production of bolineol. The cluster encodes no obvious halogenase gene that could be involved in production of strobilurin B, nor any obvious dimethylallyl-transferase that could be involved in the production of strobilurin G. It is possible that unknown proteins encoded in, or near, the cluster (such as str1 or stl1) may form new classes of halogenases or dimethylally-transferases, or that the responsible genes are located elsewhere on the genome. Similarly, proteins encoded by str5/str6 hydrolases appear to have no chemical role in the biosynthesis of strobilurin A. Finally, no obvious self-resistance gene is found within the cluster. This Strobilurus tenacellus protein is Methyltransferase str2.